The sequence spans 568 residues: Sphingosine-1-phosphate lyase 1 (568 aa).

Residues 1–41 lie on the Lumenal side of the membrane; sequence MPSTDLLKLKDFEPYLEILEAYSTKAKNYVNGYCTKYEPWQ. The chain crosses the membrane as a helical; Signal-anchor for type III membrane protein span at residues 42–62; the sequence is LIAGSVLCTLLVVWVYELIFQ. Residues 63 to 568 lie on the Cytoplasmic side of the membrane; it reads PESLWSRFKN…NQMNGSPKPR (506 aa). Lys353 is modified (N6-(pyridoxal phosphate)lysine; alternate). N6-acetyllysine; alternate is present on Lys353. 3'-nitrotyrosine is present on residues Tyr356 and Tyr366. Ser564 carries the post-translational modification Phosphoserine.

This sequence belongs to the group II decarboxylase family. Sphingosine-1-phosphate lyase subfamily. In terms of assembly, homodimer. Pyridoxal 5'-phosphate serves as cofactor.

The protein resides in the endoplasmic reticulum membrane. The catalysed reaction is sphinganine 1-phosphate = hexadecanal + phosphoethanolamine. It catalyses the reaction sphing-4-enine 1-phosphate = (2E)-hexadecenal + phosphoethanolamine. It functions in the pathway lipid metabolism; sphingolipid metabolism. Its function is as follows. Cleaves phosphorylated sphingoid bases (PSBs), such as sphingosine-1-phosphate, into fatty aldehydes and phosphoethanolamine. Elevates stress-induced ceramide production and apoptosis. Required for global lipid homeostasis in liver and cholesterol homeostasis in fibroblasts. Involved in the regulation of pro-inflammatory response and neutrophil trafficking. Modulates neuronal autophagy via phosphoethanolamine production which regulates accumulation of aggregate-prone proteins such as APP. Seems to play a role in establishing neuronal contact sites and axonal maintenance. The protein is Sphingosine-1-phosphate lyase 1 of Rattus norvegicus (Rat).